The primary structure comprises 358 residues: Probable BOI-related E3 ubiquitin-protein ligase 2 (358 aa).

A coiled-coil region spans residues Lys-171 to Thr-234. A WRD domain region spans residues Leu-214 to Leu-250. Residues Cys-310 to Thr-345 form an RING-type zinc finger.

As to quaternary structure, interacts with the DELLA proteins GAI, RGA, RGL1, RGL2 and RGL3.

It carries out the reaction S-ubiquitinyl-[E2 ubiquitin-conjugating enzyme]-L-cysteine + [acceptor protein]-L-lysine = [E2 ubiquitin-conjugating enzyme]-L-cysteine + N(6)-ubiquitinyl-[acceptor protein]-L-lysine.. The protein operates within protein degradation; proteasomal ubiquitin-dependent pathway. In terms of biological role, probable E3 ubiquitin-protein ligase. Has no effect on the stability of the DELLA proteins. This chain is Probable BOI-related E3 ubiquitin-protein ligase 2 (BRG2), found in Arabidopsis thaliana (Mouse-ear cress).